Reading from the N-terminus, the 619-residue chain is Dihydroxy-acid dehydratase (619 aa).

Residue D81 participates in Mg(2+) binding. C122 is a [2Fe-2S] cluster binding site. The Mg(2+) site is built by D123 and K124. At K124 the chain carries N6-carboxylysine. Position 195 (C195) interacts with [2Fe-2S] cluster. E494 provides a ligand contact to Mg(2+). Residue S520 is the Proton acceptor of the active site.

This sequence belongs to the IlvD/Edd family. In terms of assembly, homodimer. The cofactor is [2Fe-2S] cluster. Mg(2+) serves as cofactor.

The catalysed reaction is (2R)-2,3-dihydroxy-3-methylbutanoate = 3-methyl-2-oxobutanoate + H2O. It carries out the reaction (2R,3R)-2,3-dihydroxy-3-methylpentanoate = (S)-3-methyl-2-oxopentanoate + H2O. The protein operates within amino-acid biosynthesis; L-isoleucine biosynthesis; L-isoleucine from 2-oxobutanoate: step 3/4. It participates in amino-acid biosynthesis; L-valine biosynthesis; L-valine from pyruvate: step 3/4. Its function is as follows. Functions in the biosynthesis of branched-chain amino acids. Catalyzes the dehydration of (2R,3R)-2,3-dihydroxy-3-methylpentanoate (2,3-dihydroxy-3-methylvalerate) into 2-oxo-3-methylpentanoate (2-oxo-3-methylvalerate) and of (2R)-2,3-dihydroxy-3-methylbutanoate (2,3-dihydroxyisovalerate) into 2-oxo-3-methylbutanoate (2-oxoisovalerate), the penultimate precursor to L-isoleucine and L-valine, respectively. The polypeptide is Dihydroxy-acid dehydratase (Shewanella denitrificans (strain OS217 / ATCC BAA-1090 / DSM 15013)).